We begin with the raw amino-acid sequence, 214 residues long: Leucyl/phenylalanyl-tRNA--protein transferase (214 aa).

The disordered stretch occupies residues 194 to 214 (FAPPGYSPDPASVVQRSSQTS).

It belongs to the L/F-transferase family.

It localises to the cytoplasm. The enzyme catalyses N-terminal L-lysyl-[protein] + L-leucyl-tRNA(Leu) = N-terminal L-leucyl-L-lysyl-[protein] + tRNA(Leu) + H(+). It catalyses the reaction N-terminal L-arginyl-[protein] + L-leucyl-tRNA(Leu) = N-terminal L-leucyl-L-arginyl-[protein] + tRNA(Leu) + H(+). It carries out the reaction L-phenylalanyl-tRNA(Phe) + an N-terminal L-alpha-aminoacyl-[protein] = an N-terminal L-phenylalanyl-L-alpha-aminoacyl-[protein] + tRNA(Phe). Functions in the N-end rule pathway of protein degradation where it conjugates Leu, Phe and, less efficiently, Met from aminoacyl-tRNAs to the N-termini of proteins containing an N-terminal arginine or lysine. In Cereibacter sphaeroides (strain ATCC 17025 / ATH 2.4.3) (Rhodobacter sphaeroides), this protein is Leucyl/phenylalanyl-tRNA--protein transferase.